A 1074-amino-acid chain; its full sequence is MEECEEPEEPISLGRQEYRRRRRPSQPMVDKSQQTEITEKRKAMASVQPPAPKATHSIGNIPGSKDNYSRKEYESLRLSSQLQKTLMKRKHVQDMTDKSLQTEPIVEEKVEVIFIDKTLKLEENTAGVGEIAPELPQSIPEVEIPTSRPTSHLIDRSQQTSCTGDWSLIYICPKEKVDKEQQTYFSELEIIIRSIPGSSMTKSKEETIPIAQEDPLVEINGSLEIEVLSPEELPDVMMSFTEGEISGELQALSNGEATVKGELFLTEEIPIQAPSPAEETSAAETATTTAKDVVDIQAPPADKLSSVEAPADISPTLVQGALSDKPSDQQYPQGTEMAPSELPVEDLDPFSEEVLEKVQALTTDSMLEDLGIAESTIAEETSGKVQHPLSEETSKEVPAEVHFPIAADFEESAILINEKFATDEVFEEYKPPIIEEVSADKATAEVQPPSAEDASEEVASSEVLPPSTEQGTVEDLTAEVLSTPTEEGPTEVPPQPTEEGPAEVPPPLSEEGPAEVPPAPAEEAPAEVLPPPAEEAPAEVPPPLTEEGPAEVPPPLTEEGPAEVPLAPAEEVPAEFLPPPAEEVPAEVPPPLTEEGPAEVPPPLTEEGPEEVPPLPAEEAPTKVPPSPAEKGSAEVSPPQTEEGPAEVPPPPAEEFPTEVPSSSAEEGSSEVPLPPTAERPEEAPPPATEEAPVEVLPPATEEAPVEVLPPATEEAPVEVQSPAAEEGLAEVPPPPTEESPTHDVPTEVQVPQAKESPGQVLPLSGESTAEEASAQVQPPSFEKAPLESLPLEEVEKIHLDNLPFEVQPLPTEDIAIGVPAESQALPADENPAREDTVETQPSSFEGAPIAENPIEAPLPASEADTGREDSAVHPSSLGPTDEAPAEIQILQTDDIPTEMSPVENQPLPAEEGFPEVVSEEEATAAEVRFPLSEGAPAQEATVEAQLTSVEESPKRASVDVQPLSPETPVEESPGVDLPLKTNEVTMQEFRVEKMPAEDSLPPSEQTPADQVLLKEHRLSQVADISEKELESTTLTSDKMSEGIDSVPEDVSGTKDDQISTFKIEGTIKIELKN.

Residues 1–73 (MEECEEPEEP…SKDNYSRKEY (73 aa)) are disordered. Phosphoserine occurs at positions 25, 57, 186, and 275. 2 disordered regions span residues 272 to 294 (QAPSPAEETSAAETATTTAKDVV) and 317 to 343 (LVQGALSDKPSDQQYPQGTEMAPSELP). A compositionally biased stretch (low complexity) spans 274–290 (PSPAEETSAAETATTTA). Position 365 is a phosphoserine (Ser-365). 2 disordered regions span residues 437 to 789 (VSAD…PLES) and 818 to 982 (GVPA…PLKT). Low complexity predominate over residues 448–467 (PPSAEDASEEVASSEVLPPS). A compositionally biased stretch (pro residues) spans 528–544 (VLPPPAEEAPAEVPPPL). A compositionally biased stretch (low complexity) spans 558–575 (EEGPAEVPLAPAEEVPAE). 2 stretches are compositionally biased toward pro residues: residues 576–592 (FLPPPAEEVPAEVPPPL) and 673–688 (PLPPTAERPEEAPPPA). A compositionally biased stretch (low complexity) spans 689-720 (TEEAPVEVLPPATEEAPVEVLPPATEEAPVEV). The residue at position 1020 (Ser-1020) is a Phosphoserine. Residues 1026 to 1054 (SEKELESTTLTSDKMSEGIDSVPEDVSGT) are disordered.

As to quaternary structure, interacts with CABYR. Interacts with ROPN1 and ROPN1L; the interaction increases upon spermatozoa capacitation conditions. Post-translationally, phosphorylated by PKA upon spermatozoa capacitation conditions. As to expression, expression is restricted to testis and epididymis, expressed by spermatozoa.

It localises to the cell projection. The protein resides in the cilium. Its subcellular location is the flagellum. In terms of biological role, may be involved in the later stages of fibrous sheath biogenesis and spermatozoa capacitation. Inhibits ROPN1 and ROPN1L SUMOylation. Binds calcium. The chain is Fibrous sheath CABYR-binding protein from Mus musculus (Mouse).